We begin with the raw amino-acid sequence, 296 residues long: Lipoyl synthase (296 aa).

[4Fe-4S] cluster-binding residues include cysteine 37, cysteine 42, cysteine 48, cysteine 63, cysteine 67, cysteine 70, and serine 276. The 217-residue stretch at 49–265 (WSKKHTTVMI…ERLAKTKGFL (217 aa)) folds into the Radical SAM core domain.

This sequence belongs to the radical SAM superfamily. Lipoyl synthase family. [4Fe-4S] cluster serves as cofactor.

Its subcellular location is the cytoplasm. It carries out the reaction [[Fe-S] cluster scaffold protein carrying a second [4Fe-4S](2+) cluster] + N(6)-octanoyl-L-lysyl-[protein] + 2 oxidized [2Fe-2S]-[ferredoxin] + 2 S-adenosyl-L-methionine + 4 H(+) = [[Fe-S] cluster scaffold protein] + N(6)-[(R)-dihydrolipoyl]-L-lysyl-[protein] + 4 Fe(3+) + 2 hydrogen sulfide + 2 5'-deoxyadenosine + 2 L-methionine + 2 reduced [2Fe-2S]-[ferredoxin]. The protein operates within protein modification; protein lipoylation via endogenous pathway; protein N(6)-(lipoyl)lysine from octanoyl-[acyl-carrier-protein]: step 2/2. Catalyzes the radical-mediated insertion of two sulfur atoms into the C-6 and C-8 positions of the octanoyl moiety bound to the lipoyl domains of lipoate-dependent enzymes, thereby converting the octanoylated domains into lipoylated derivatives. The chain is Lipoyl synthase from Rickettsia rickettsii (strain Iowa).